The following is an 85-amino-acid chain: Small ribosomal subunit protein uS17 (85 aa).

It belongs to the universal ribosomal protein uS17 family. As to quaternary structure, part of the 30S ribosomal subunit.

Functionally, one of the primary rRNA binding proteins, it binds specifically to the 5'-end of 16S ribosomal RNA. The polypeptide is Small ribosomal subunit protein uS17 (Actinobacillus succinogenes (strain ATCC 55618 / DSM 22257 / CCUG 43843 / 130Z)).